We begin with the raw amino-acid sequence, 505 residues long: COMPASS component BRE2 (505 aa).

Residues 70-295 (SANPFFTILG…LKQETTNKEF (226 aa)) form the B30.2/SPRY domain. S227 carries the phosphoserine modification. The segment at 271 to 290 (EPWREDAENGPSRKKLKQET) is disordered. Residue K318 participates in DNA binding. The segment at 398 to 420 (RDESNDKNTTSAKKKKQQQKKKK) is disordered. Over residues 409–420 (AKKKKQQQKKKK) the composition is skewed to basic residues.

Belongs to the cclA family. Component of the Set1C/COMPASS complex which consists of SET1(2), BRE2(2), SPP1(2), SDC1(1), SHG1(1), SWD1(1), SWD2(1), and SWD3(1). Interacts directly with SDC1.

The protein localises to the nucleus. The protein resides in the chromosome. It localises to the telomere. Its function is as follows. Component of the Set1C/COMPASS complex that specifically mono-, di- and trimethylates histone H3 to form H3K4me1/2/3, which subsequently plays a role in telomere length maintenance and transcription elongation regulation. COMPASS recognizes ubiquitinated H2B on one face of the nucleosome which stimulates the methylation of H3 on the opposing face. The polypeptide is COMPASS component BRE2 (Saccharomyces cerevisiae (strain ATCC 204508 / S288c) (Baker's yeast)).